The following is a 148-amino-acid chain: Secretory phospholipase A2 (148 aa).

Positions Met-1–Ala-23 are cleaved as a signal peptide. An N-linked (GlcNAc...) asparagine glycan is attached at Asn-61. Residues Cys-62 and Cys-78 are joined by a disulfide bond. His-81 is an active-site residue. Asp-82 contributes to the Ca(2+) binding site.

It belongs to the phospholipase A2 family. Ca(2+) is required as a cofactor.

The protein resides in the secreted. It carries out the reaction a 1,2-diacyl-sn-glycero-3-phosphocholine + H2O = a 1-acyl-sn-glycero-3-phosphocholine + a fatty acid + H(+). Functionally, secretory phospholipase that catalyzes the calcium-dependent hydrolysis of the 2-acyl groups in 3-sn-phosphoglycerides. Increases the ability to utilize host-derived nutrients and lipids, and promotes lipid dropplets accumulation. Plays a role in virulence. In Arthroderma benhamiae (strain ATCC MYA-4681 / CBS 112371) (Trichophyton mentagrophytes), this protein is Secretory phospholipase A2.